A 937-amino-acid polypeptide reads, in one-letter code: Calsyntenin-2 (937 aa).

The N-terminal stretch at 1–22 (MKMRAITAMLLLVLSGQCGILA) is a signal peptide. Residues 23 to 818 (GKVNKHKPWI…NSDHISGTPP (796 aa)) are Extracellular-facing. 2 Cadherin domains span residues 32 to 148 (IETS…SPVF) and 149 to 249 (REPL…KPGW). N86 carries an N-linked (GlcNAc...) asparagine glycan. Residues N330, N365, and N716 are each glycosylated (N-linked (GlcNAc...) asparagine). Residues 819 to 839 (AATVVIVMCIAALVVIVVLGI) form a helical membrane-spanning segment. Residues 840–937 (YRIHTTHQDS…LEWDPSTLPY (98 aa)) lie on the Cytoplasmic side of the membrane. The tract at residues 846 to 937 (HQDSSKEDEE…LEWDPSTLPY (92 aa)) is disordered. Positions 865-874 (DNSNLNSIEG) are enriched in polar residues. Acidic residues-rich tracts occupy residues 881-900 (VREE…DDLA) and 907-917 (ESEDSDEDEET).

Belongs to the calsyntenin family. As to quaternary structure, homooligomer and heterooligomer; mediates both homophilic and heterophilc interactions with clstn1 and clstn3 paralogs via cadherin domains. By 48 hours post-fertilization (hpf), widely expressed in the brain, with strong expression in the telencephalon and the midbrain.

It is found in the postsynaptic cell membrane. The protein localises to the endoplasmic reticulum membrane. Its subcellular location is the golgi apparatus membrane. It localises to the cell projection. The protein resides in the dendrite. Functionally, postsynaptic adhesion molecule. Promotes synapse development by acting as a cell adhesion molecule at the postsynaptic membrane, which associates with presynaptic neurexins. The protein is Calsyntenin-2 (clstn2a) of Danio rerio (Zebrafish).